A 354-amino-acid chain; its full sequence is L-lactate dehydrogenase (354 aa).

NAD(+) is bound by residues 73 to 78 (DAVPDK) and Arg-120. Arg-127, Asn-159, and Arg-190 together coordinate substrate. Asn-159 is a binding site for NAD(+). His-214 functions as the Proton acceptor in the catalytic mechanism. A substrate-binding site is contributed by Thr-269. The disordered stretch occupies residues 302–332 (HGIPDGTTSSSACPPRRPRRRPGRREMELTE).

It belongs to the LDH/MDH superfamily. LDH family. In terms of assembly, homotetramer.

The enzyme catalyses (S)-lactate + NAD(+) = pyruvate + NADH + H(+). The protein operates within fermentation; pyruvate fermentation to lactate; (S)-lactate from pyruvate: step 1/1. The protein is L-lactate dehydrogenase of Zea mays (Maize).